We begin with the raw amino-acid sequence, 299 residues long: NAD kinase (299 aa).

Aspartate 71 functions as the Proton acceptor in the catalytic mechanism. NAD(+)-binding positions include 71-72, 145-146, arginine 173, aspartate 175, 186-191, alanine 210, and glutamine 248; these read DG, ND, and TAYALS.

This sequence belongs to the NAD kinase family. The cofactor is a divalent metal cation.

It localises to the cytoplasm. The catalysed reaction is NAD(+) + ATP = ADP + NADP(+) + H(+). In terms of biological role, involved in the regulation of the intracellular balance of NAD and NADP, and is a key enzyme in the biosynthesis of NADP. Catalyzes specifically the phosphorylation on 2'-hydroxyl of the adenosine moiety of NAD to yield NADP. The protein is NAD kinase of Bordetella avium (strain 197N).